A 246-amino-acid polypeptide reads, in one-letter code: 23S rRNA (guanosine-2'-O-)-methyltransferase RlmB (246 aa).

S-adenosyl-L-methionine is bound by residues Gly-197, Ile-217, and Leu-226.

This sequence belongs to the class IV-like SAM-binding methyltransferase superfamily. RNA methyltransferase TrmH family. RlmB subfamily.

The protein resides in the cytoplasm. The catalysed reaction is guanosine(2251) in 23S rRNA + S-adenosyl-L-methionine = 2'-O-methylguanosine(2251) in 23S rRNA + S-adenosyl-L-homocysteine + H(+). Specifically methylates the ribose of guanosine 2251 in 23S rRNA. This chain is 23S rRNA (guanosine-2'-O-)-methyltransferase RlmB, found in Haemophilus influenzae (strain ATCC 51907 / DSM 11121 / KW20 / Rd).